A 308-amino-acid polypeptide reads, in one-letter code: MKPPGDNAPAGCPFSGARAAQPAHEAPHVPGDAAGETGWHDAQLDFSKSMSYGDYLSLNSILDAQHPLSPDHNEMLFIIQHQTSELWMKLALFELRGALDAVRGDALPPAFKMLARVSRILEQLVQAWNVLSTMTPSEYSAMRPYLGQSSGFQSYQYRQLEFLLGNKNVQMLQPHAHRPDILEQVRATLEAPSFYDEVVRLLARRGFPIASERLERDWTQPMRHDETVEAAWLEVYRHPQQHWELYEMAEELVDLEDAFRQWRFRHVTTVERIIGFKQGTGGTSGAPYLRKMLDVVLFPELWHVRTTL.

The segment at Met-1 to Thr-37 is disordered. Residues Phe-77–His-81, Tyr-139, and Arg-143 each bind substrate. Position 266 (His-266) interacts with heme. Thr-280 serves as a coordination point for substrate.

It belongs to the tryptophan 2,3-dioxygenase family. As to quaternary structure, homotetramer. Heme serves as cofactor.

It carries out the reaction L-tryptophan + O2 = N-formyl-L-kynurenine. The protein operates within amino-acid degradation; L-tryptophan degradation via kynurenine pathway; L-kynurenine from L-tryptophan: step 1/2. Its function is as follows. Heme-dependent dioxygenase that catalyzes the oxidative cleavage of the L-tryptophan (L-Trp) pyrrole ring and converts L-tryptophan to N-formyl-L-kynurenine. Catalyzes the oxidative cleavage of the indole moiety. In Burkholderia ambifaria (strain MC40-6), this protein is Tryptophan 2,3-dioxygenase.